A 202-amino-acid polypeptide reads, in one-letter code: Holliday junction branch migration complex subunit RuvA (202 aa).

A domain I region spans residues 1-65 (MIAYVEGRLA…EDALELYGFA (65 aa)). Positions 66 to 144 (TWDERQTFIV…VEDLPAAAPL (79 aa)) are domain II. Residues 145 to 155 (VTGGAPGGVFR) form a flexible linker region. The tract at residues 155–202 (RDALAGLANLGYGEEEASHVLKDVLHGEPDLDVGGALRAALRALARGR) is domain III.

The protein belongs to the RuvA family. In terms of assembly, homotetramer. Forms an RuvA(8)-RuvB(12)-Holliday junction (HJ) complex. HJ DNA is sandwiched between 2 RuvA tetramers; dsDNA enters through RuvA and exits via RuvB. An RuvB hexamer assembles on each DNA strand where it exits the tetramer. Each RuvB hexamer is contacted by two RuvA subunits (via domain III) on 2 adjacent RuvB subunits; this complex drives branch migration. In the full resolvosome a probable DNA-RuvA(4)-RuvB(12)-RuvC(2) complex forms which resolves the HJ.

Its subcellular location is the cytoplasm. Functionally, the RuvA-RuvB-RuvC complex processes Holliday junction (HJ) DNA during genetic recombination and DNA repair, while the RuvA-RuvB complex plays an important role in the rescue of blocked DNA replication forks via replication fork reversal (RFR). RuvA specifically binds to HJ cruciform DNA, conferring on it an open structure. The RuvB hexamer acts as an ATP-dependent pump, pulling dsDNA into and through the RuvAB complex. HJ branch migration allows RuvC to scan DNA until it finds its consensus sequence, where it cleaves and resolves the cruciform DNA. The protein is Holliday junction branch migration complex subunit RuvA of Nitratidesulfovibrio vulgaris (strain ATCC 29579 / DSM 644 / CCUG 34227 / NCIMB 8303 / VKM B-1760 / Hildenborough) (Desulfovibrio vulgaris).